We begin with the raw amino-acid sequence, 83 residues long: Lipolysis-activating peptide 1-alpha chain (83 aa).

Residues 1–21 form the signal peptide; that stretch reads MNIILFYFMPILISLPGLLAS. An LCN-type CS-alpha/beta domain is found at 22–83; sequence GTYPNDVYGL…LFWDVYKEHC (62 aa). Cystine bridges form between Cys-35-Cys-58, Cys-44-Cys-63, and Cys-48-Cys-65.

Belongs to the long (3 C-C) scorpion toxin superfamily. As to quaternary structure, monomer (edited version) and heterodimer (non-edited version) of this alpha chain and a beta chain (AC P0CI43). As to expression, expressed by the venom gland.

Its subcellular location is the secreted. The heterodimer non-edited LVP1 induces lipolysis in rat adipocytes. Induction of lipolysis by LVP1 appears to be mediated through the beta-2 adrenergic receptor pathway (ADRB2). Its function is as follows. The edited BmKBTx-like, similar to beta-toxins, may modulate voltage-gated sodium channels (Nav) and may block voltage-gated potassium channels (Kv). The chain is Lipolysis-activating peptide 1-alpha chain from Lychas mucronatus (Chinese swimming scorpion).